We begin with the raw amino-acid sequence, 515 residues long: Maturase K (515 aa).

The protein belongs to the intron maturase 2 family. MatK subfamily.

Its subcellular location is the plastid. It localises to the chloroplast. Usually encoded in the trnK tRNA gene intron. Probably assists in splicing its own and other chloroplast group II introns. The protein is Maturase K of Pinus halepensis (Aleppo pine).